Here is a 515-residue protein sequence, read N- to C-terminus: 2,3-bisphosphoglycerate-independent phosphoglycerate mutase (515 aa).

2 residues coordinate Mn(2+): Asp-14 and Ser-63. Residue Ser-63 is part of the active site. Residues His-124, 154–155 (RD), Arg-186, Arg-192, 259–262 (RADR), and Lys-334 contribute to the substrate site. Mn(2+) contacts are provided by Asp-401, His-405, Asp-442, His-443, and His-460.

This sequence belongs to the BPG-independent phosphoglycerate mutase family. The cofactor is Mg(2+). Mn(2+) is required as a cofactor.

It catalyses the reaction (2R)-2-phosphoglycerate = (2R)-3-phosphoglycerate. The protein operates within carbohydrate degradation; glycolysis; pyruvate from D-glyceraldehyde 3-phosphate: step 3/5. With respect to regulation, activity is not affected by 2,3-bisphosphoglycerate. Its function is as follows. Catalyzes the interconversion of 2-phosphoglycerate and 3-phosphoglycerate. The protein is 2,3-bisphosphoglycerate-independent phosphoglycerate mutase of Onchocerca volvulus.